The sequence spans 438 residues: Xylose isomerase (438 aa).

Residues H100 and D103 contribute to the active site. E231, E267, H270, D295, D306, D308, and D338 together coordinate Mg(2+).

The protein belongs to the xylose isomerase family. Homotetramer. The cofactor is Mg(2+).

Its subcellular location is the cytoplasm. It catalyses the reaction alpha-D-xylose = alpha-D-xylulofuranose. The sequence is that of Xylose isomerase from Thermoanaerobacter sp. (strain X514).